We begin with the raw amino-acid sequence, 313 residues long: Small ribosomal subunit protein uS2 (313 aa).

Basic and acidic residues predominate over residues 228–256 (RQEDKAAEAQDKDAQDTEDNKGARPRGAE). The disordered stretch occupies residues 228-313 (RQEDKAAEAQ…VSKAGDKPKK (86 aa)).

The protein belongs to the universal ribosomal protein uS2 family.

This chain is Small ribosomal subunit protein uS2, found in Amoebophilus asiaticus (strain 5a2).